The sequence spans 100 residues: Aspartyl/glutamyl-tRNA(Asn/Gln) amidotransferase subunit C (100 aa).

Belongs to the GatC family. Heterotrimer of A, B and C subunits.

It carries out the reaction L-glutamyl-tRNA(Gln) + L-glutamine + ATP + H2O = L-glutaminyl-tRNA(Gln) + L-glutamate + ADP + phosphate + H(+). The catalysed reaction is L-aspartyl-tRNA(Asn) + L-glutamine + ATP + H2O = L-asparaginyl-tRNA(Asn) + L-glutamate + ADP + phosphate + 2 H(+). Its function is as follows. Allows the formation of correctly charged Asn-tRNA(Asn) or Gln-tRNA(Gln) through the transamidation of misacylated Asp-tRNA(Asn) or Glu-tRNA(Gln) in organisms which lack either or both of asparaginyl-tRNA or glutaminyl-tRNA synthetases. The reaction takes place in the presence of glutamine and ATP through an activated phospho-Asp-tRNA(Asn) or phospho-Glu-tRNA(Gln). This is Aspartyl/glutamyl-tRNA(Asn/Gln) amidotransferase subunit C from Streptococcus equi subsp. equi (strain 4047).